A 176-amino-acid polypeptide reads, in one-letter code: Cell division control protein 31 (176 aa).

Basic residues predominate over residues 1-12 (MFANARAKRRSR). Positions 1–21 (MFANARAKRRSRASSPTPARL) are disordered. 4 EF-hand domains span residues 34–69 (EQRQ…LGFN), 70–105 (AEKS…KIVE), 107–142 (DPLE…LNEN), and 143–176 (IDDQ…MDEA). Ca(2+)-binding residues include Asp47, Asp49, Asp51, and Glu58. Ca(2+)-binding residues include Asp156, Asp158, Asp160, Glu162, and Glu167.

The protein belongs to the centrin family. As to quaternary structure, component of the spindle pole body (SPB), acting as the connector of microtubule arrays in the cytoplasm and the nucleoplasm, is involved in nuclear positioning before chromosome segregation, SPB separation, spindle formation, chromosome segregation, nuclear migration into the bud, nuclear reorientation after cytokinesis and nuclear fusion during conjugation. The SPB half-bridge, which is tightly associated with the cytoplasmic side of the nuclear envelope and the SPB, is playing a key role as the starting structure for and in the initiation of SPB duplication in G1. Within the complex, interacts with sad1.

The protein resides in the nucleus. Functionally, required for the proper coordination between exit from mitosis and the initiation of septation. Has a role in bipolar spindle formation during spindle pole body (SPB) duplication. Required for the localization of sad1 to the SPB. This is Cell division control protein 31 (cdc31) from Schizosaccharomyces pombe (strain 972 / ATCC 24843) (Fission yeast).